Reading from the N-terminus, the 236-residue chain is Lipoprotein NlpE (236 aa).

The first 20 residues, 1 to 20, serve as a signal peptide directing secretion; the sequence is MVKKAIVTAMAVISLFTLMG. A lipid anchor (N-palmitoyl cysteine) is attached at Cys-21. Cys-21 carries the S-diacylglycerol cysteine lipid modification. An N-terminal domain region spans residues 21-100; the sequence is CNNRAEVDTL…WARTADKLVL (80 aa). Residues 21–236 lie on the Periplasmic side of the membrane; sequence CNNRAEVDTL…PNQDCSSLGQ (216 aa). The CXXC signature appears at 51–54; the sequence is CADC. Residues 126–236 are C-terminal domain; that stretch reads PIESQFNYTL…PNQDCSSLGQ (111 aa). The tract at residues 144–156 is could contain a copper-binding motif; the sequence is MTPMTLRGMYFYM. Cys-165 and Cys-231 are joined by a disulfide.

As to quaternary structure, probably exists as a monomer in vivo, can however form homodimers which swap domains. Palmitoylated. In terms of processing, seems to only form a disulfide bond between Cys-165 and Cys-231. The 2 other cysteine residues may however be chemically active.

The protein resides in the cell outer membrane. In terms of biological role, involved in copper homeostasis, could be involved in both copper efflux and the delivery of copper to copper-dependent enzymes. Required for efficient binding of stationary phase cells to hydrophobic surfaces, part of the process of biofilm formation. Functions during envelope stress responses; when overproduced induces degP through the activation of the two-component envelope stress response system CpxA/CpxR. DegP induction seems to require membrane anchoring of this protein. Structural changes and/or interaction of the CXXC motif with its environment may lead to activation of the Cpx stress response. This is Lipoprotein NlpE from Escherichia coli (strain K12).